We begin with the raw amino-acid sequence, 23 residues long: YMVIQGEPGAVIRLGDYLIDQGL.

It belongs to the profilin family. In terms of assembly, occurs in many kinds of cells as a complex with monomeric actin in a 1:1 ratio.

It localises to the cytoplasm. The protein resides in the cytoskeleton. In terms of biological role, binds to actin and affects the structure of the cytoskeleton. At high concentrations, profilin prevents the polymerization of actin, whereas it enhances it at low concentrations. By binding to PIP2, it inhibits the formation of IP3 and DG. In Beta vulgaris (Sugar beet), this protein is Profilin.